Consider the following 333-residue polypeptide: Trans-1,2-dihydrobenzene-1,2-diol dehydrogenase (333 aa).

Belongs to the Gfo/Idh/MocA family. As to quaternary structure, homodimer.

The enzyme catalyses (1R,2R)-1,2-dihydrobenzene-1,2-diol + NADP(+) = catechol + NADPH + H(+). The catalysed reaction is D-xylose + NADP(+) = D-xylono-1,5-lactone + NADPH + H(+). The protein is Trans-1,2-dihydrobenzene-1,2-diol dehydrogenase (Dhdh) of Mus musculus (Mouse).